Here is a 201-residue protein sequence, read N- to C-terminus: Lipopolysaccharide core heptose(II)-phosphate phosphatase (201 aa).

An N-terminal signal peptide occupies residues 1–35; sequence MLAFTLRFIKNKRYFAILAGALVIIAGLTSQHAWS.

It belongs to the phosphoglycerate mutase family. Ais subfamily.

Its subcellular location is the periplasm. Its pathway is bacterial outer membrane biogenesis; lipopolysaccharide metabolism. Catalyzes the dephosphorylation of heptose(II) of the outer membrane lipopolysaccharide core. This chain is Lipopolysaccharide core heptose(II)-phosphate phosphatase, found in Salmonella enteritidis PT4 (strain P125109).